A 274-amino-acid chain; its full sequence is uncharacterized protein (274 aa).

A signal peptide spans 1 to 19; it reads MKRINKVLLSLLCLVIAYA.

This is an uncharacterized protein from Rickettsia prowazekii (strain Madrid E).